The sequence spans 533 residues: Phospho-2-dehydro-3-deoxyheptonate aldolase 1, chloroplastic (533 aa).

The transit peptide at 1–57 (MALSTNSTTSSLLPKTPLVQQPLLKNASLPTTTKAIRFIQPISAIHSSDSSKNTPIV) directs the protein to the chloroplast. A compositionally biased stretch (polar residues) spans 47–56 (SSDSSKNTPI). The tract at residues 47–70 (SSDSSKNTPIVSAKPSSPPAATST) is disordered. A compositionally biased stretch (low complexity) spans 57 to 70 (VSAKPSSPPAATST). Cys-145 is a binding site for Mn(2+). Substrate contacts are provided by residues Arg-184, 343–344 (ER), Lys-366, and Arg-397. The Mn(2+) site is built by His-429, Glu-471, and Asp-501.

The protein belongs to the class-II DAHP synthase family. In terms of assembly, homodimer. It depends on Mn(2+) as a cofactor. As to expression, mostly expressed in flowers, especially in petal limbs and tubes, and, to a lower extent, in roots, stems, stigmas, anthers, leaves and sepals.

It localises to the plastid. The protein localises to the chloroplast. The enzyme catalyses D-erythrose 4-phosphate + phosphoenolpyruvate + H2O = 7-phospho-2-dehydro-3-deoxy-D-arabino-heptonate + phosphate. The protein operates within metabolic intermediate biosynthesis; chorismate biosynthesis; chorismate from D-erythrose 4-phosphate and phosphoenolpyruvate: step 1/7. Functionally, involved in the production of volatile organic compounds (VOCs), including floral volatile benzenoids and phenylpropanoids (FVBP), in flowers of fragrant cultivars (e.g. cv. Mitchell and cv. V26), scent attracting pollinators (e.g. the night-active hawkmoth pollinator Manduca sexta). Catalyzes an aldol-like condensation reaction between phosphoenolpyruvate (PEP) and D-erythrose 4-phosphate (E4P) to generate 3-deoxy-D-arabino-heptulosonate 7-phosphate (DAH7P) and inorganic phosphate. The chain is Phospho-2-dehydro-3-deoxyheptonate aldolase 1, chloroplastic from Petunia hybrida (Petunia).